Consider the following 490-residue polypeptide: Glutamyl-tRNA(Gln) amidotransferase subunit A (490 aa).

Active-site charge relay system residues include Lys-80 and Ser-155. Ser-179 serves as the catalytic Acyl-ester intermediate.

This sequence belongs to the amidase family. GatA subfamily. In terms of assembly, heterotrimer of A, B and C subunits.

It carries out the reaction L-glutamyl-tRNA(Gln) + L-glutamine + ATP + H2O = L-glutaminyl-tRNA(Gln) + L-glutamate + ADP + phosphate + H(+). Allows the formation of correctly charged Gln-tRNA(Gln) through the transamidation of misacylated Glu-tRNA(Gln) in organisms which lack glutaminyl-tRNA synthetase. The reaction takes place in the presence of glutamine and ATP through an activated gamma-phospho-Glu-tRNA(Gln). The chain is Glutamyl-tRNA(Gln) amidotransferase subunit A from Brevibacillus brevis (strain 47 / JCM 6285 / NBRC 100599).